The primary structure comprises 400 residues: S-adenosylmethionine synthase (400 aa).

Residue His17 coordinates ATP. Asp19 is a binding site for Mg(2+). Glu45 contacts K(+). Residues Glu58 and Gln101 each contribute to the L-methionine site. Residues 101 to 111 (QSADIAMGVDQ) are flexible loop. Residues 177 to 179 (DGK), 244 to 245 (RF), Asp253, 259 to 260 (RK), Ala276, and Lys280 contribute to the ATP site. Asp253 contacts L-methionine. L-methionine is bound at residue Lys284.

The protein belongs to the AdoMet synthase family. Homotetramer; dimer of dimers. Requires Mg(2+) as cofactor. The cofactor is K(+).

It is found in the cytoplasm. The catalysed reaction is L-methionine + ATP + H2O = S-adenosyl-L-methionine + phosphate + diphosphate. It functions in the pathway amino-acid biosynthesis; S-adenosyl-L-methionine biosynthesis; S-adenosyl-L-methionine from L-methionine: step 1/1. Catalyzes the formation of S-adenosylmethionine (AdoMet) from methionine and ATP. The overall synthetic reaction is composed of two sequential steps, AdoMet formation and the subsequent tripolyphosphate hydrolysis which occurs prior to release of AdoMet from the enzyme. In Bacillus subtilis (strain 168), this protein is S-adenosylmethionine synthase.